We begin with the raw amino-acid sequence, 540 residues long: Coiled-coil domain-containing protein 116 (540 aa).

The stretch at 79–102 (QVLDSLQTVVEQATECVATMKTEA) forms a coiled coil. The tract at residues 347-400 (PGNSDLQPSSKASLPTDREARGETCYSPTSASSPKTSHRKSKDRRGSPSNAVQM) is disordered. Composition is skewed to polar residues over residues 350–359 (SDLQPSSKAS) and 372–381 (YSPTSASSPK). Position 393 is a phosphoserine (serine 393).

The protein resides in the cytoplasm. It is found in the cytoskeleton. The protein localises to the microtubule organizing center. It localises to the centrosome. The chain is Coiled-coil domain-containing protein 116 (Ccdc116) from Rattus norvegicus (Rat).